A 435-amino-acid chain; its full sequence is Mitochondrial association factor 1 form a1 (435 aa).

An N-terminal signal peptide occupies residues Met1 to Gly20. Over Ala21–Arg95 the chain is Vacuolar. Positions Gly43–Thr88 are disordered. A compositionally biased stretch (basic and acidic residues) spans Val55–Glu64. Residues Arg96–Leu116 traverse the membrane as a helical segment. Residues Arg117–Asp435 lie on the Cytoplasmic side of the membrane. A disordered region spans residues Arg120 to Pro162. A compositionally biased stretch (low complexity) spans Pro141 to Pro153.

As to quaternary structure, interacts with host SAMM50.

It localises to the parasitophorous vacuole membrane. Its function is as follows. During host cell infection by tachyzoites, does not play a role in tethering the parasitophorous vacuole to the host mitochondria, probably because it does not bind host mitochondrial import protein TOMM70. The chain is Mitochondrial association factor 1 form a1 from Toxoplasma gondii.